Here is a 103-residue protein sequence, read N- to C-terminus: Large ribosomal subunit protein bL32m (103 aa).

The transit peptide at 1 to 47 (MALLRGNSLAISQKMLSVFQASALPHISLRIFISPPSIANIWNSILL) directs the protein to the mitochondrion. The Zn(2+) site is built by C77, C80, C90, and C93.

It belongs to the bacterial ribosomal protein bL32 family. In terms of assembly, component of the mitochondrial large ribosomal subunit (mt-LSU). Mature yeast 74S mitochondrial ribosomes consist of a small (37S) and a large (54S) subunit. The 37S small subunit contains a 15S ribosomal RNA (15S mt-rRNA) and at least 32 different proteins. The 54S large subunit contains a 21S rRNA (21S mt-rRNA) and at least 45 different proteins. bL32m has a zinc binding site. MRPL32 precursor is processed by the m-AAA protease, which cleaves the N-terminal transit peptide. Cleavage by the m-AAA protease takes place prior to assembly into the large subunit, an essential step for mitochondrial ribosome (mitoribosome) assembly. Proper processing by the m-AAA protease is dependent on the zinc-binding region within the tightly folded C-terminal domain of MRPL32: zinc-dependent folding halts degradation initiated from the N-terminus and triggers the release of mature mrpl32.

The protein localises to the mitochondrion. Functionally, component of the mitochondrial ribosome (mitoribosome), a dedicated translation machinery responsible for the synthesis of mitochondrial genome-encoded proteins, including at least some of the essential transmembrane subunits of the mitochondrial respiratory chain. The mitoribosomes are attached to the mitochondrial inner membrane and translation products are cotranslationally integrated into the membrane. This is Large ribosomal subunit protein bL32m (mrpl32) from Schizosaccharomyces pombe (strain 972 / ATCC 24843) (Fission yeast).